A 966-amino-acid polypeptide reads, in one-letter code: MANPQEHLSCSSSPRLPLSENKTFNGLQDDLAPMGSHASPKLLKDQQEKGMVQTELAEGTNSPITTTVLTSISEDSRDQFENSVLQLREQDESEMAMSHGNSNTVDGEGTSGTEDIKIQFSRSGSGSGGFLEGLFGCLRPVWNIIGKAYSTDYKLQQQDTWEVPFEEISELQWLGSGAQGAVFLGKFRAEEVAIKKVREQNETDIKHLRKLKHPNIIAFKGVCTQAPCYCIIMEYCAHGQLYEVLRAGRKITPRLLVDWSTGIASGMNYLHLHKIIHRDLKSPNVLVTHTDAVKISDFGTSKELSDKSTKMSFAGTVAWMAPEVIRNEPVSEKVDIWSFGVVLWELLTGEIPYKDVDSSAIIWGVGSNSLHLPVPSTCPDGFKILMKQTWQSKTRNRPSFRQTLMHLDIASADVLATPQETYFKSQAEWREEVKKHFEKIKSEGTCIHRLDEELIRRRREELRHALDIREHYERKLERANNLYMELSAIMLQLEMREKELIKREQAVEKKYPGTYKRHPVRPIIHPNAMEKLMKRKGMPHRPGMQAKRPDLLRSEGIPSVEVAPTASPLSGSPKLSSSSSKSRYRSKPRHRRGNSRGSHGDFAAILKNQPAQEDSPHPTSLHQAEPQYPSSQHHNLLQQQYQQPPPAMSQSHHPRLNMHGQDIATCPNNLRYFGPAAALRSPLSNHSQRQMPGSSPDLISTAMAADCWRSSEPDKGQAGPWGCCQADPYDPCLQCRPEQHGSLDVPSAKPVGRSPSLFKPPAHNPLLENAQGSEKMEENEFSGYRSASSLGASHHITPPVLPRKTRPLQKSGDDSSEEEEGEVDSEVEFPRRQRPHRCISSCQSYSTFSSENFSVSDGEEGNTSDHSNSPDELADKLEDHLAEKLDDLLSQTPEIPIEISSHSDGLSDKECAVRRVKTQMSLGKLCAEERGYENPMQFEESDCDSSDGECSDATVRTNKHYSSATW.

The interval 1–59 (MANPQEHLSCSSSPRLPLSENKTFNGLQDDLAPMGSHASPKLLKDQQEKGMVQTELAEG) is disordered. The segment covering 8-19 (LSCSSSPRLPLS) has biased composition (low complexity). Residues 168–409 (ISELQWLGSG…FRQTLMHLDI (242 aa)) form the Protein kinase domain. ATP-binding positions include 174–182 (LGSGAQGAV) and lysine 195. Aspartate 279 functions as the Proton acceptor in the catalytic mechanism. Leucine-zipper stretches follow at residues 433-454 (VKKH…DEEL) and 486-507 (LSAI…EQAV). Residues 457–496 (RRREELRHALDIREHYERKLERANNLYMELSAIMLQLEMR) adopt a coiled-coil conformation. Disordered stretches follow at residues 561–663 (EVAP…GQDI), 743–874 (LDVP…DELA), and 937–966 (QFEE…SATW). A compositionally biased stretch (low complexity) spans 567–581 (SPLSGSPKLSSSSSK). A compositionally biased stretch (basic residues) spans 582 to 594 (SRYRSKPRHRRGN). A compositionally biased stretch (polar residues) spans 609 to 622 (QPAQEDSPHPTSLH). The span at 629-642 (PSSQHHNLLQQQYQ) shows a compositional bias: low complexity. Positions 814-827 (DSSEEEEGEVDSEV) are enriched in acidic residues. The interval 815–828 (SSEEEEGEVDSEVE) is acidic. Residues 840–855 (SSCQSYSTFSSENFSV) are compositionally biased toward polar residues. The span at 939-950 (EESDCDSSDGEC) shows a compositional bias: acidic residues. Residues 954–966 (TVRTNKHYSSATW) show a composition bias toward polar residues.

Belongs to the protein kinase superfamily. Ser/Thr protein kinase family. In terms of assembly, homodimer; forms dimers through the leucine-zipper motif. Interacts with the C-terminus of MAPK8IP1 through the kinase catalytic domain. Binds PRDX3. Associates with the IKK complex through the kinase domain. Mg(2+) is required as a cofactor. Autophosphorylated on serine and threonine residues.

Its subcellular location is the cytoplasm. The protein resides in the membrane. The catalysed reaction is L-seryl-[protein] + ATP = O-phospho-L-seryl-[protein] + ADP + H(+). It carries out the reaction L-threonyl-[protein] + ATP = O-phospho-L-threonyl-[protein] + ADP + H(+). Activated by autophosphorylation and homodimerization. In terms of biological role, activates the JUN N-terminal pathway through activation of the MAP kinase kinase MAP2K7. Acts synergistically with PRDX3 to regulate the activation of NF-kappa-B in the cytosol. This activation is kinase-dependent and involves activating the IKK complex, the IKBKB-containing complex that phosphorylates inhibitors of NF-kappa-B. The protein is Mitogen-activated protein kinase kinase kinase 13 (MAP3K13) of Bos taurus (Bovine).